The chain runs to 254 residues: Isoprenyl transferase (254 aa).

Aspartate 23 is an active-site residue. Aspartate 23 is a binding site for Mg(2+). Residues glycine 24 to arginine 27, tryptophan 28, arginine 36, histidine 40, and serine 68 to glutamate 70 contribute to the substrate site. Catalysis depends on asparagine 71, which acts as the Proton acceptor. Substrate-binding positions include tryptophan 72, arginine 74, arginine 191, and arginine 197 to serine 199. Glutamate 210 lines the Mg(2+) pocket.

Belongs to the UPP synthase family. Homodimer. The cofactor is Mg(2+).

Its function is as follows. Catalyzes the condensation of isopentenyl diphosphate (IPP) with allylic pyrophosphates generating different type of terpenoids. The polypeptide is Isoprenyl transferase (Porphyromonas gingivalis (strain ATCC BAA-308 / W83)).